We begin with the raw amino-acid sequence, 342 residues long: Phenylalanine--tRNA ligase alpha subunit (342 aa).

Residue Glu-255 participates in Mg(2+) binding.

Belongs to the class-II aminoacyl-tRNA synthetase family. Phe-tRNA synthetase alpha subunit type 1 subfamily. As to quaternary structure, tetramer of two alpha and two beta subunits. Mg(2+) serves as cofactor.

It is found in the cytoplasm. It carries out the reaction tRNA(Phe) + L-phenylalanine + ATP = L-phenylalanyl-tRNA(Phe) + AMP + diphosphate + H(+). The sequence is that of Phenylalanine--tRNA ligase alpha subunit from Pelotomaculum thermopropionicum (strain DSM 13744 / JCM 10971 / SI).